The following is a 2517-amino-acid chain: MAPAPSALVFGSQTTLPSVEAASRLRAALLLDPRLYRMRTSIESLPEIWPALAISDPALERVAGPAEKSLRQLCRWLSHSEFPDATEISELPATFVTPFTVILHTVLYMHYTDENGSRGHADVLRAVRNNGGVQGFCTGFLTAVSVATSPDLEALSRQASVALRLAVAIGAYIDLDLLDSDVSSVAVRSRAGKKGLEETLAQFPGAYISVITDELNATVTAPRASLDALSQSLASNGLSAKRFDLRGRFHHPAHQKALEGLYNLVASNPVFQFSHSELLAPVYSNIDGQLLSSDSIIDTLLQSILVQRCDWYASISTALHKRSNGEKTSVVQFSLVECIPPSVLRQARLSVQRITDVPVQNSPATVPAPLNAVRARIQTSEPIAIIGMGCKFPGADTLDEYWQLLAQGTSMCRTMPEERFKTSSLRRSPGEKLKFWGNFVNDVDAFDHRFFKKSSREAASMDPQQRLVLQVAYQTLESAEYSGLSGIKASRDVGCYLGLCASDYTDNVASHPPNAFSSLGTLRAFLSGKISHFFGWTGPSITYDTACSSSAVAIQAACRALQTGECSMALAGGVSLYTSPNFYQNLSAASFLSPTGPTKPFDAKGDGYCRGEGVGLVFLKPLSSALADHDNIMGVIAAAAVNQNQNSTAITVPHSESQIELYRKVVSEAGLHPHDVSFVEAHGTGTPVGDPIEFTSIRTVFGGSNRANPLAIASVKGNIGHTEGAAACINNYGAAGSNAAMIVTEAPTGARSEKQGTLPKCPIYVSANTVSSLKEYCKELLRSLRGRSPDCLASLAFQLANSQNRGFPHALITSVTSKAELEDQLSAVVENRNNSLHTVAPTERPVVLAFGGQVARSVGLSRQVYDSSAVLRTHLSNCDDILTSAGLNSIFPAIFRKEPIADVVLLHSALFSAQYACAMTWIEAGVIPAALIGHSFGQLTALSVGRVLSLKDGLGLITERAKLMRDAWGPEHGSMVSVQADVQTVARLMKAAETKDPKDALEIACFNGPTSHVVVGSADAADRLEAALTQESIRYKRLAVSHGFHSKFTEPLLLGLEQCAERLTFRTPKYAIETCSSGSSWSEFNASMIVQHTRTPVYYTEALARIEAKLGACTWLEVGTGGSVAGMIRGALNVPSDHLIQAVNLAGETGTAALADATVNLWKSSHKLQFWAFHRSERECYQPLELPPYQFEKTRHWLDWKDTMTEQATVTQSTREETSVEEFLTFVKYKDSTKQQAEFRISTEHEKYSFFVKGHAVLAEPLCPAPLYIDLACKAGQMVYSDTSETLIIPSVEDLEIQAPLGVGDRVIILRLQQSPFLKTAWTFCFCSRPVMGNSAEEQLHASGTVVLRENDTKTAAEFSRFGRLVSSKRVQEMKSDPDCHILQGPVVYQLFSRVVSYADYYKGVQSVYASGAEVTGRIRLPPTVKDADTRRPLLVDNFIQTAGIHVNCLTDVGAKEVYVCTKVDRVQSAAAFTEDLANVDASWIVHSSYHPTSEKEVVNDIFVFNAATGELAMFILGAHFTRVQISSLGRVLSRANTADAAPIKVAVPVQSPALRAQPKRVLLPPLTKRSITRPTLEISEKLKKTLSRVVEVPVADIHDGGILADLGVDSLLGTEVLTEINQVFNVSIPADEFALLTDVASISKCLASYLGVHDSGSQPEDLADADSVESDSDMPTGAVTSGITTPDDAVSRLADLLAENLEYDGTIEASNNLADLGLDSILSIELANDIKKIFNCDVDMSQLNMESTFADLIALVPALNIEQSLSSVPASLTTQGSDFEMAQHAFEQIRFDYDIYTKETGFYDFWKRVYPAQSRLVLAYTVEAFAQLGCDLALMHPGDRLPKIGYLPAHEKLVQQLYNILRDGMLVATSDSGFVRSDKPVDPTSSTRLLEEINTIAPQHASEHSLLHITGSKLADCLTGTADPLNLLFRSKANRDLLAEVYLNGPMYAAISRLLCSFLGNAFSDRQSSGTFQILELGGGTGGTTGHVLDYLVRSGIPFTYTFSDVSGSFVAAARKKFAGRPYMEYQVIDIEKEPADSLTGKFHAVISTNCIHATTNLEISTGNIHRMLRPDGFVALVEFTRNMYWFDLVFGLLEGWWLFEDGRQHVIASESFWNTSMRKAGFQHVSWTDGDSFEARTLRIIAGFRAPAVNEIYTPRLDSRDTETAVESVMYKQADGIPLFADIYYPPSVSNEPRPIALMIHGGGHIMLSRKDIRPKQTAHLHTLGFLPVSIDYRLCPETTLTEGPMRDVSDAMAWARSTLCSLPLLCPGLTLDPSRVVVVGWSTGGHLAMTTAFTSIERGLSPPDAILAFYCPTDYEDRVWTQPNYPENTDVDGLSLMKYNLLEGVQDRPITAYNIPLTSRSNSKAGGTPAGGWMAPDDPRSRIVLHMNWKGQCLPVLLRGLPPSNSLSPGDAEKLISQPQPEIEEIQRVSPYAQIRRGVYRTPTFVIHGTDDDLIPYEQSVRTVQALKDMGVRAEVSVPQGKAHLFDMFKDADGSSWEVVKRGYDFLKEEVSGK.

Residues 59-250 (LERVAGPAEK…KRFDLRGRFH (192 aa)) form an N-terminal acylcarrier protein transacylase domain (SAT) region. Positions 380–775 (SEPIAIIGMG…SANTVSSLKE (396 aa)) constitute a Ketosynthase family 3 (KS3) domain. Residues Cys-547, His-682, and His-721 each act as for beta-ketoacyl synthase activity in the active site. Positions 849–1158 (AFGGQVARSV…TGTAALADAT (310 aa)) are malonyl-CoA:ACP transacylase (MAT) domain. The active-site For acyl/malonyl transferase activity is Ser-935. An N-terminal hotdog fold region spans residues 1221 to 1353 (EEFLTFVKYK…GTVVLRENDT (133 aa)). The PKS/mFAS DH domain occupies 1221 to 1530 (EEFLTFVKYK…FTRVQISSLG (310 aa)). The tract at residues 1251 to 1525 (FVKGHAVLAE…ILGAHFTRVQ (275 aa)) is product template (PT) domain. The Proton acceptor; for dehydratase activity role is filled by His-1255. The interval 1379 to 1530 (DCHILQGPVV…FTRVQISSLG (152 aa)) is C-terminal hotdog fold. Catalysis depends on Asp-1437, which acts as the Proton donor; for dehydratase activity. One can recognise a Carrier 1 domain in the interval 1574-1651 (RPTLEISEKL…SISKCLASYL (78 aa)). At Ser-1611 the chain carries O-(pantetheine 4'-phosphoryl)serine. A disordered region spans residues 1659–1684 (QPEDLADADSVESDSDMPTGAVTSGI). Positions 1662–1673 (DLADADSVESDS) are enriched in acidic residues. The Carrier 2 domain maps to 1685-1761 (TTPDDAVSRL…DLIALVPALN (77 aa)). Ser-1721 is subject to O-(pantetheine 4'-phosphoryl)serine. Residues 1976–2075 (LELGGGTGGT…IHRMLRPDGF (100 aa)) form a methyltransferase (CMeT) domain region. A thioesterase (TE) domain region spans residues 2200-2514 (LMIHGGGHIM…RGYDFLKEEV (315 aa)).

Pantetheine 4'-phosphate serves as cofactor.

It catalyses the reaction 3 malonyl-CoA + acetyl-CoA + S-adenosyl-L-methionine + H(+) = 3-methylorsellinate + S-adenosyl-L-homocysteine + 3 CO2 + 4 CoA. It functions in the pathway phytotoxin biosynthesis. Non-reducing polyketide synthase; part of the gene cluster that mediates the biosynthesis of cichorine, a phytotoxin active against knapweed, corn, and soybeans. The first step in the pathway is performed by the non-reducing polyketide synthase pkbA that condenses one acetyl-CoA starter unit with 3 malonyl-CoA units. PkbA also catalyzes one methylation step to produce 3-methylorsellinate. The nonribosomal peptide synthase-like protein cicB, the cytochrome P450 monooxygenase cicH and the O-methyltransferase cicE are involved in the conversion of 3-methylorsellinate into nidulol. CicB converts 3-methylorsellinate to a yet unidentified intermediate, cicH may play a ring-closing role for cichorine and cicE is plausibly responsible for the methylation of one of the phenol groups. The oxidoreductase cicC acts downstream with still unidentified enzymes to further convert nidulol into cichorin. The sequence is that of Non-reducing polyketide synthase pkbA from Emericella nidulans (strain FGSC A4 / ATCC 38163 / CBS 112.46 / NRRL 194 / M139) (Aspergillus nidulans).